A 159-amino-acid chain; its full sequence is Transcription repressor OFP6 (159 aa).

The tract at residues 39 to 60 (PKRPSSTYRHCHSSISSATPSS) is disordered. The span at 51 to 60 (SSISSATPSS) shows a compositional bias: low complexity. One can recognise an OVATE domain in the interval 70 to 129 (VEKDSDDPYLDFRQSMLQMILENQIYSKDELRELLQCFLSLNSHYHHGIIVRAFSEIWED).

In terms of assembly, interacts with KNAT1 and KNAT7. As to expression, expressed in roots, shoots, rosette and cauline leaves, stems, flower buds and siliques.

Its subcellular location is the nucleus. Its function is as follows. Transcriptional repressor that regulates multiple aspects of plant growth and development through the regulation of BEL1-LIKE (BLH) and KNOX TALE (KNAT) homeodomain transcription factors. The protein is Transcription repressor OFP6 (OFP6) of Arabidopsis thaliana (Mouse-ear cress).